Consider the following 157-residue polypeptide: Arginine repressor (157 aa).

It belongs to the ArgR family.

It is found in the cytoplasm. The protein operates within amino-acid biosynthesis; L-arginine biosynthesis [regulation]. Its function is as follows. Regulates arginine biosynthesis genes. This chain is Arginine repressor, found in Lactobacillus delbrueckii subsp. bulgaricus (strain ATCC 11842 / DSM 20081 / BCRC 10696 / JCM 1002 / NBRC 13953 / NCIMB 11778 / NCTC 12712 / WDCM 00102 / Lb 14).